We begin with the raw amino-acid sequence, 190 residues long: Dual specificity protein phosphatase 21 (190 aa).

The Tyrosine-protein phosphatase domain occupies 21 to 162; it reads SFSQITRSLF…LINYEFKLFN (142 aa). The segment at 43 to 128 is sufficient for mitochondrial localization; the sequence is LSSNRITAIV…AYLMKYHSMS (86 aa). Residue Cys-106 is the Phosphocysteine intermediate of the active site.

This sequence belongs to the protein-tyrosine phosphatase family. Non-receptor class dual specificity subfamily. As to quaternary structure, microtubule inner protein component of sperm flagellar doublet microtubules. Expressed in testis.

It is found in the cytoplasm. It localises to the nucleus. The protein resides in the mitochondrion inner membrane. The protein localises to the cytoskeleton. Its subcellular location is the flagellum axoneme. The enzyme catalyses O-phospho-L-tyrosyl-[protein] + H2O = L-tyrosyl-[protein] + phosphate. It catalyses the reaction O-phospho-L-seryl-[protein] + H2O = L-seryl-[protein] + phosphate. It carries out the reaction O-phospho-L-threonyl-[protein] + H2O = L-threonyl-[protein] + phosphate. Its function is as follows. Protein phosphatase component of the sperm flagellar doublet microtubules. May act as a regulator of sperm motility by mediating dephosphorylation of sperm doublet microtubule proteins. Can dephosphorylate single and diphosphorylated synthetic MAPK peptides, with preference for the phosphotyrosine and diphosphorylated forms over phosphothreonine. The sequence is that of Dual specificity protein phosphatase 21 (DUSP21) from Homo sapiens (Human).